Here is a 171-residue protein sequence, read N- to C-terminus: Transcription elongation factor GreB (171 aa).

The stretch at 53–75 (KKRLREIDRRVRFLAKRLEVLKI) forms a coiled coil.

The protein belongs to the GreA/GreB family. GreB subfamily.

In terms of biological role, necessary for efficient RNA polymerase transcription elongation past template-encoded arresting sites. The arresting sites in DNA have the property of trapping a certain fraction of elongating RNA polymerases that pass through, resulting in locked ternary complexes. Cleavage of the nascent transcript by cleavage factors such as GreA or GreB allows the resumption of elongation from the new 3'terminus. GreB releases sequences of up to 9 nucleotides in length. The protein is Transcription elongation factor GreB of Yersinia pestis.